Consider the following 694-residue polypeptide: Probable metal-nicotianamine transporter YSL8 (694 aa).

14 helical membrane passes run 38-58 (ITVRSLVVSAVLGTFLSFIVM), 62-82 (LTSGIVPSLNVSAGLLAFFLM), 110-130 (CVISCSSIAFSGGFGTYILGM), 154-174 (LGRLIAFLFLVSFVGLFSIVP), 215-235 (ILFKSFVGSFLWSLFQWFYAA), 265-285 (VGVGMICPYIINFSLLIGSVV), 319-339 (VFISIAMIVGDGLFNFFSIVL), 393-413 (IAAAAYVLLAAISVVAIPHIF), 421-441 (VVWAYVVAPLFAFCNAYGTGL), 467-487 (GGVVAGLAACGLMMGIVSTAS), 506-526 (MFVSQVLGTGMGCIISPMVFW), 567-587 (LRFCLAFFLLAIAICALKEVA), 608-628 (FFLGSFFTIDMCVGSLVLFLW), and 643-663 (VASGLICGDGIWSLPSSILSL).

It belongs to the YSL (TC 2.A.67.2) family. Expressed in root epidermis and exoderm.

It is found in the membrane. Its function is as follows. May be involved in the transport of nicotianamine-chelated metals. This Oryza sativa subsp. japonica (Rice) protein is Probable metal-nicotianamine transporter YSL8 (YSL8).